The sequence spans 288 residues: Syntaxin-1A (288 aa).

Over residues methionine 1–aspartate 13 the composition is skewed to basic and acidic residues. A disordered region spans residues methionine 1 to valine 20. The Cytoplasmic portion of the chain corresponds to methionine 1–lysine 265. A phosphoserine mark is found at serine 14, serine 64, and serine 95. The stretch at aspartate 68–serine 109 forms a coiled coil. Serine 188 carries the phosphoserine; by DAPK1 modification. Residues leucine 192–alanine 254 form the t-SNARE coiled-coil homology domain. Residues lysine 252, lysine 253, and lysine 256 each participate in a glycyl lysine isopeptide (Lys-Gly) (interchain with G-Cter in SUMO) cross-link. Residues isoleucine 266 to isoleucine 286 traverse the membrane as a helical; Anchor for type IV membrane protein segment. Over phenylalanine 287–glycine 288 the chain is Extracellular.

This sequence belongs to the syntaxin family. Part of the SNARE core complex containing SNAP25, VAMP2 and STX1A; this complex constitutes the basic catalytic machinery of the complex neurotransmitter release apparatus. The SNARE complex interacts with CPLX1. Interacts with STXBP1. The interaction with STXBP1 promotes assembly of the SNARE complex. Interacts (via C-terminus) with KCNB1 (via C-terminus); the interaction increases in a calcium-dependent manner and induces a pore-independent enhancement of exocytosis in neuroendocrine cells, chromaffin cells, pancreatic beta cells and from the soma of dorsal root ganglia (DRG) neurons. Interacts with SYTL4. Interacts with STXBP6. Interacts with PLCL1 (via C2 domain). Interacts with OTOF. Interacts with LGI3. Interacts (via the H3 domain) with SLC6A4 (via the N-terminus); this interaction regulates SLC4A6 channel conductance in thalamocortical neurons. Interacts with SYT6 and SYT8; the interaction is Ca(2+)-dependent. Interacts with VAMP8. Interacts with SNAP23. Interacts with VAPA and SYBU. Interacts with PRRT2. Interacts with SEPT8. Interacts with STXBP5L. Interacts with synaptotagmin-1/SYT1. Interacts with SEPTIN5; in the cerebellar cortex. Interacts with SEPTIN4; in the striatum. In terms of processing, phosphorylated by CK2. Phosphorylation at Ser-188 by DAPK1 significantly decreases its interaction with STXBP1. Post-translationally, phosphorylated by CK2. Phosphorylation at Ser-188 by DAPK1 significantly decreases its interaction with STXBP1. Sumoylated, sumoylation is required for regulation of synaptic vesicle endocytosis. As to expression, expressed in the striatum (at protein level). Expressed in the ileum.

The protein localises to the cytoplasmic vesicle. The protein resides in the secretory vesicle. It localises to the synaptic vesicle membrane. Its subcellular location is the synapse. It is found in the synaptosome. The protein localises to the cell membrane. In terms of biological role, plays an essential role in hormone and neurotransmitter calcium-dependent exocytosis and endocytosis. Part of the SNARE (Soluble NSF Attachment Receptor) complex composed of SNAP25, STX1A and VAMP2 which mediates the fusion of synaptic vesicles with the presynaptic plasma membrane. STX1A and SNAP25 are localized on the plasma membrane while VAMP2 resides in synaptic vesicles. The pairing of the three SNAREs from the N-terminal SNARE motifs to the C-terminal anchors leads to the formation of the SNARE complex, which brings membranes into close proximity and results in final fusion. Participates in the calcium-dependent regulation of acrosomal exocytosis in sperm. Also plays an important role in the exocytosis of hormones such as insulin or glucagon-like peptide 1 (GLP-1). This is Syntaxin-1A (Stx1a) from Mus musculus (Mouse).